A 108-amino-acid chain; its full sequence is T-cell acute lymphocytic leukemia protein 2 homolog (108 aa).

A bHLH domain is found at 2-54 (TRKIFTNTRERWRQQSVNNAFAKLRKLIPTHPPDKKLSKNETLRLAMRYINFL). The tract at residues 76 to 108 (GLFPPKTRLPDEDDRTLLNDYRVPSPGPSHGAP) is disordered.

The chain is T-cell acute lymphocytic leukemia protein 2 homolog (Tal2) from Mus musculus (Mouse).